The sequence spans 95 residues: uncharacterized protein (95 aa).

The segment at residues 1-24 is a signal peptide (or 21); sequence MKKLATLTALAGALTMAVATAAQA. Over residues 55 to 89 the composition is skewed to basic and acidic residues; it reads EGKCGADKAKSAEGKCGEGKCGADKAKSAEGKCGE. Residues 55 to 95 are disordered; the sequence is EGKCGADKAKSAEGKCGEGKCGADKAKSAEGKCGEGKCGSK.

This is an uncharacterized protein from Haemophilus influenzae (strain ATCC 51907 / DSM 11121 / KW20 / Rd).